Consider the following 401-residue polypeptide: Imidazolonepropionase (401 aa).

Fe(3+) is bound by residues His-70 and His-72. Residues His-70 and His-72 each contribute to the Zn(2+) site. Arg-79, Tyr-142, and His-175 together coordinate 4-imidazolone-5-propanoate. Tyr-142 contacts N-formimidoyl-L-glutamate. His-240 is a binding site for Fe(3+). His-240 is a Zn(2+) binding site. 4-imidazolone-5-propanoate is bound at residue Gln-243. Asp-315 provides a ligand contact to Fe(3+). Asp-315 is a Zn(2+) binding site. Residues Asn-317 and Gly-319 each coordinate N-formimidoyl-L-glutamate. A 4-imidazolone-5-propanoate-binding site is contributed by Thr-320.

This sequence belongs to the metallo-dependent hydrolases superfamily. HutI family. The cofactor is Zn(2+). Requires Fe(3+) as cofactor.

Its subcellular location is the cytoplasm. The enzyme catalyses 4-imidazolone-5-propanoate + H2O = N-formimidoyl-L-glutamate. Its pathway is amino-acid degradation; L-histidine degradation into L-glutamate; N-formimidoyl-L-glutamate from L-histidine: step 3/3. In terms of biological role, catalyzes the hydrolytic cleavage of the carbon-nitrogen bond in imidazolone-5-propanoate to yield N-formimidoyl-L-glutamate. It is the third step in the universal histidine degradation pathway. This chain is Imidazolonepropionase, found in Caulobacter sp. (strain K31).